Reading from the N-terminus, the 504-residue chain is ATP synthase subunit alpha (504 aa).

Position 169–176 (169–176 (GDRQTGKT)) interacts with ATP.

This sequence belongs to the ATPase alpha/beta chains family. In terms of assembly, F-type ATPases have 2 components, CF(1) - the catalytic core - and CF(0) - the membrane proton channel. CF(1) has five subunits: alpha(3), beta(3), gamma(1), delta(1), epsilon(1). CF(0) has three main subunits: a(1), b(2) and c(9-12). The alpha and beta chains form an alternating ring which encloses part of the gamma chain. CF(1) is attached to CF(0) by a central stalk formed by the gamma and epsilon chains, while a peripheral stalk is formed by the delta and b chains.

It is found in the cell membrane. The catalysed reaction is ATP + H2O + 4 H(+)(in) = ADP + phosphate + 5 H(+)(out). In terms of biological role, produces ATP from ADP in the presence of a proton gradient across the membrane. The alpha chain is a regulatory subunit. This chain is ATP synthase subunit alpha, found in Clostridium botulinum (strain ATCC 19397 / Type A).